Consider the following 159-residue polypeptide: Phosphopantetheine adenylyltransferase (159 aa).

Thr9 is a substrate binding site. ATP-binding positions include 9–10 (TF) and His17. Residues Lys41, Leu73, and Arg87 each coordinate substrate. Residues 88–90 (GLR), Glu98, and 123–129 (YSFISST) contribute to the ATP site.

Belongs to the bacterial CoaD family. As to quaternary structure, homohexamer. Requires Mg(2+) as cofactor.

Its subcellular location is the cytoplasm. It carries out the reaction (R)-4'-phosphopantetheine + ATP + H(+) = 3'-dephospho-CoA + diphosphate. It participates in cofactor biosynthesis; coenzyme A biosynthesis; CoA from (R)-pantothenate: step 4/5. Functionally, reversibly transfers an adenylyl group from ATP to 4'-phosphopantetheine, yielding dephospho-CoA (dPCoA) and pyrophosphate. The polypeptide is Phosphopantetheine adenylyltransferase (Pseudomonas aeruginosa (strain LESB58)).